The chain runs to 258 residues: Flagellin B3 (258 aa).

Positions 1 to 8 (MRFLKKRG) are excised as a propeptide.

It belongs to the archaeal flagellin family.

It is found in the archaeal flagellum. Functionally, flagellin is the subunit protein which polymerizes to form the filaments of archaeal flagella. In Thermococcus kodakarensis (strain ATCC BAA-918 / JCM 12380 / KOD1) (Pyrococcus kodakaraensis (strain KOD1)), this protein is Flagellin B3 (flaB3).